The chain runs to 158 residues: Cyclic pyranopterin monophosphate synthase (158 aa).

Substrate is bound by residues 75–77 (LCH) and 111–112 (ME). Asp126 is an active-site residue.

Belongs to the MoaC family. In terms of assembly, homohexamer; trimer of dimers.

It catalyses the reaction (8S)-3',8-cyclo-7,8-dihydroguanosine 5'-triphosphate = cyclic pyranopterin phosphate + diphosphate. It functions in the pathway cofactor biosynthesis; molybdopterin biosynthesis. In terms of biological role, catalyzes the conversion of (8S)-3',8-cyclo-7,8-dihydroguanosine 5'-triphosphate to cyclic pyranopterin monophosphate (cPMP). This chain is Cyclic pyranopterin monophosphate synthase, found in Caulobacter vibrioides (strain ATCC 19089 / CIP 103742 / CB 15) (Caulobacter crescentus).